Consider the following 280-residue polypeptide: Putative pyruvate, phosphate dikinase regulatory protein (280 aa).

An ADP-binding site is contributed by 153–160; that stretch reads GISRTSKT.

It belongs to the pyruvate, phosphate/water dikinase regulatory protein family. PDRP subfamily.

The catalysed reaction is N(tele)-phospho-L-histidyl/L-threonyl-[pyruvate, phosphate dikinase] + ADP = N(tele)-phospho-L-histidyl/O-phospho-L-threonyl-[pyruvate, phosphate dikinase] + AMP + H(+). The enzyme catalyses N(tele)-phospho-L-histidyl/O-phospho-L-threonyl-[pyruvate, phosphate dikinase] + phosphate + H(+) = N(tele)-phospho-L-histidyl/L-threonyl-[pyruvate, phosphate dikinase] + diphosphate. Bifunctional serine/threonine kinase and phosphorylase involved in the regulation of the pyruvate, phosphate dikinase (PPDK) by catalyzing its phosphorylation/dephosphorylation. The protein is Putative pyruvate, phosphate dikinase regulatory protein of Bartonella quintana (strain Toulouse) (Rochalimaea quintana).